A 950-amino-acid polypeptide reads, in one-letter code: Glycine dehydrogenase (decarboxylating) (950 aa).

The residue at position 698 (lysine 698) is an N6-(pyridoxal phosphate)lysine.

This sequence belongs to the GcvP family. In terms of assembly, the glycine cleavage system is composed of four proteins: P, T, L and H. It depends on pyridoxal 5'-phosphate as a cofactor.

It carries out the reaction N(6)-[(R)-lipoyl]-L-lysyl-[glycine-cleavage complex H protein] + glycine + H(+) = N(6)-[(R)-S(8)-aminomethyldihydrolipoyl]-L-lysyl-[glycine-cleavage complex H protein] + CO2. Its function is as follows. The glycine cleavage system catalyzes the degradation of glycine. The P protein binds the alpha-amino group of glycine through its pyridoxal phosphate cofactor; CO(2) is released and the remaining methylamine moiety is then transferred to the lipoamide cofactor of the H protein. The sequence is that of Glycine dehydrogenase (decarboxylating) from Neisseria gonorrhoeae (strain ATCC 700825 / FA 1090).